Here is a 139-residue protein sequence, read N- to C-terminus: Large ribosomal subunit protein bL17 (139 aa).

Residues 120–139 form a disordered region; it reads EDAKGRDSGPTQDNSEAEAA.

In terms of assembly, part of the 50S ribosomal subunit. Contacts protein L32. In terms of processing, may be methylated thrice, on undetermined residues.

This Rhodopseudomonas palustris (strain ATCC BAA-98 / CGA009) protein is Large ribosomal subunit protein bL17.